We begin with the raw amino-acid sequence, 217 residues long: tRNA (guanine-N(7)-)-methyltransferase (217 aa).

Glu45, Glu70, Asp97, and Asp119 together coordinate S-adenosyl-L-methionine. The active site involves Asp119. Lys123 serves as a coordination point for substrate. The interaction with RNA stretch occupies residues 125–130 (RHEKRR). Substrate-binding positions include Asp155 and 195–198 (TEYE).

It belongs to the class I-like SAM-binding methyltransferase superfamily. TrmB family.

It catalyses the reaction guanosine(46) in tRNA + S-adenosyl-L-methionine = N(7)-methylguanosine(46) in tRNA + S-adenosyl-L-homocysteine. The protein operates within tRNA modification; N(7)-methylguanine-tRNA biosynthesis. Functionally, catalyzes the formation of N(7)-methylguanine at position 46 (m7G46) in tRNA. The chain is tRNA (guanine-N(7)-)-methyltransferase from Lactobacillus helveticus (strain DPC 4571).